The primary structure comprises 168 residues: MGYWKSKVVPRMKKLFEKSPAKKEVVEEEKPREVEVVEEVVVKTEEPAKEGETKPEEIIATGEKEIEIVEEKKEEAKPVEVPVLAAAEEKKPAVEEEKKTAPVEEKKPAVEEEKKPAVEEKKPVEEEKKEVVAAVPVAETPSTKAPETPVVETPAKAPETPAAAPQKA.

A lipid anchor (N-myristoyl glycine) is attached at Gly-2. Repeat copies occupy residues 26 to 30, 69 to 73, 94 to 99, 103 to 107, 110 to 115, 118 to 122, and 124 to 129. Residues 26 to 129 form a 7 X 5 AA approximate repeats of V-E-E-K-K region; the sequence is VEEEKPREVE…EKKPVEEEKK (104 aa). Residues 56-77 adopt a coiled-coil conformation; that stretch reads EEIIATGEKEIEIVEEKKEEAK. Basic and acidic residues predominate over residues 88-131; the sequence is EEKKPAVEEEKKTAPVEEKKPAVEEEKKPAVEEKKPVEEEKKEV. The interval 88 to 168 is disordered; it reads EEKKPAVEEE…ETPAAAPQKA (81 aa). The segment covering 152-168 has biased composition (low complexity); that stretch reads ETPAKAPETPAAAPQKA.

It belongs to the DREPP family. Binds microtubules. Interacts with calcium ion Ca(2+), calmodulin and some phosphatidylinositol phosphates (PtdInsPs) such as phosphatidylinositol 3,5-bisphosphate [PtdIns(3,5)P(2)], PtdIns(4,5)P(2) and PtdIns(3,4,5)P(3). It depends on Cu(2+) as a cofactor. In terms of tissue distribution, mostly expressed in the expanding cells, specifically in roots (except in root tips) and flowers (at protein level). Also detected in cotyledons, hypocotyls and trichome stalks.

The protein localises to the cell membrane. It is found in the cytoplasm. Its subcellular location is the cytoskeleton. May be involved in intracellular signaling through interaction with PtdInsPs and calmodulin (CaM); may keep PtdInsPs attached to the plasma membrane until Ca(2+)-CaM reaches a competitive concentration subsequent to an increase triggered by a stimulus, thus leading to PtdInsPs release and subsequent activation of InsPs-dependent signaling cascade. Binds to microtubules and inhibits tubulin polymerization. Regulates directional cell growth and cortical microtubule organization by destabilizing microtubules (e.g. in cotyledon pavement cells). In Arabidopsis thaliana (Mouse-ear cress), this protein is Plasma membrane-associated cation-binding protein 2.